The primary structure comprises 216 residues: Alanyl-tRNA editing protein AlaX-M (216 aa).

Zn(2+) is bound by residues histidine 99, histidine 103, and cysteine 182.

The protein belongs to the class-II aminoacyl-tRNA synthetase family. Editing domain AlaX-M subfamily. In terms of assembly, monomer. Zn(2+) is required as a cofactor.

It localises to the cytoplasm. In terms of biological role, functions in trans to edit the amino acid moiety from mischarged charged Gly-tRNA(Ala) and Ser-tRNA(Ala). This Pyrococcus horikoshii (strain ATCC 700860 / DSM 12428 / JCM 9974 / NBRC 100139 / OT-3) protein is Alanyl-tRNA editing protein AlaX-M (alaXM).